Reading from the N-terminus, the 276-residue chain is F420-dependent methylenetetrahydromethanopterin dehydrogenase (276 aa).

The protein belongs to the MTD family.

The catalysed reaction is 5,10-methylenetetrahydromethanopterin + oxidized coenzyme F420-(gamma-L-Glu)(n) + 2 H(+) = 5,10-methenyl-5,6,7,8-tetrahydromethanopterin + reduced coenzyme F420-(gamma-L-Glu)(n). Functionally, catalyzes the oxidation of methylene-H(4)MPT to methenyl-H(4)MPT(+). In Methanosphaera stadtmanae (strain ATCC 43021 / DSM 3091 / JCM 11832 / MCB-3), this protein is F420-dependent methylenetetrahydromethanopterin dehydrogenase.